Reading from the N-terminus, the 104-residue chain is UPF0134 protein MPN_104 (104 aa).

The protein belongs to the UPF0134 family.

This is UPF0134 protein MPN_104 from Mycoplasma pneumoniae (strain ATCC 29342 / M129 / Subtype 1) (Mycoplasmoides pneumoniae).